The chain runs to 453 residues: Tubulin alpha-1/2/3 chain (453 aa).

Glutamine 11 contributes to the GTP binding site. Lysine 40 carries the post-translational modification N6-acetyllysine. Residues glutamate 71, serine 140, glycine 144, threonine 145, threonine 179, asparagine 206, and asparagine 228 each contribute to the GTP site. Glutamate 71 provides a ligand contact to Mg(2+). Glutamate 254 is an active-site residue. Residues 429–453 (EKDYEEVGTESQEGDGEEGEDGGDQ) are disordered. The span at 431-453 (DYEEVGTESQEGDGEEGEDGGDQ) shows a compositional bias: acidic residues.

It belongs to the tubulin family. In terms of assembly, dimer of alpha and beta chains. A typical microtubule is a hollow water-filled tube with an outer diameter of 25 nm and an inner diameter of 15 nM. Alpha-beta heterodimers associate head-to-tail to form protofilaments running lengthwise along the microtubule wall with the beta-tubulin subunit facing the microtubule plus end conferring a structural polarity. Microtubules usually have 13 protofilaments but different protofilament numbers can be found in some organisms and specialized cells. It depends on Mg(2+) as a cofactor. Post-translationally, acetylation of alpha chains at Lys-40 stabilizes microtubules and affects affinity and processivity of microtubule motors. This modification has a role in multiple cellular functions, ranging from cell motility, cell cycle progression or cell differentiation to intracellular trafficking and signaling.

It is found in the cytoplasm. Its subcellular location is the cytoskeleton. The catalysed reaction is GTP + H2O = GDP + phosphate + H(+). Functionally, tubulin is the major constituent of microtubules, a cylinder consisting of laterally associated linear protofilaments composed of alpha- and beta-tubulin heterodimers. Microtubules grow by the addition of GTP-tubulin dimers to the microtubule end, where a stabilizing cap forms. Below the cap, tubulin dimers are in GDP-bound state, owing to GTPase activity of alpha-tubulin. This Naegleria gruberi (Amoeba) protein is Tubulin alpha-1/2/3 chain (TBA1).